Here is a 403-residue protein sequence, read N- to C-terminus: Cysteine desulfurase IscS (403 aa).

Pyridoxal 5'-phosphate is bound by residues 75–76 (AT), Asn155, Gln183, and 203–205 (SAH). An N6-(pyridoxal phosphate)lysine modification is found at Lys206. Residue Thr243 participates in pyridoxal 5'-phosphate binding. Cys328 serves as the catalytic Cysteine persulfide intermediate. Cys328 lines the [2Fe-2S] cluster pocket.

The protein belongs to the class-V pyridoxal-phosphate-dependent aminotransferase family. NifS/IscS subfamily. Homodimer. Forms a heterotetramer with IscU, interacts with other sulfur acceptors. Pyridoxal 5'-phosphate serves as cofactor.

Its subcellular location is the cytoplasm. It catalyses the reaction (sulfur carrier)-H + L-cysteine = (sulfur carrier)-SH + L-alanine. It functions in the pathway cofactor biosynthesis; iron-sulfur cluster biosynthesis. In terms of biological role, master enzyme that delivers sulfur to a number of partners involved in Fe-S cluster assembly, tRNA modification or cofactor biosynthesis. Catalyzes the removal of elemental sulfur atoms from cysteine to produce alanine. Functions as a sulfur delivery protein for Fe-S cluster synthesis onto IscU, an Fe-S scaffold assembly protein, as well as other S acceptor proteins. The sequence is that of Cysteine desulfurase IscS from Psychromonas ingrahamii (strain DSM 17664 / CCUG 51855 / 37).